A 402-amino-acid chain; its full sequence is Dynactin subunit 2 (402 aa).

Residues 1-24 (MADPKYADLPGIARNEPDVYETSD) form a disordered region. The residue at position 2 (alanine 2) is an N-acetylalanine. Tyrosine 6 carries the phosphotyrosine modification. Position 83 is a phosphoserine (serine 83). Phosphotyrosine is present on tyrosine 86. Residues 100 to 130 (QQKYQRLLHEVQELTTEVEKIKTTVKESATE) adopt a coiled-coil conformation. Threonine 134 and threonine 199 each carry phosphothreonine. Residues 185–205 (KSSKGSSGGKSTGGTPPDSSL) form a disordered region. The stretch at 215 to 247 (EQDKFSQAAKVAELEKRLTELEATVRCDQDAQN) forms a coiled coil. Residue serine 321 is modified to Phosphoserine.

It belongs to the dynactin subunit 2 family. As to quaternary structure, subunit of dynactin, a multiprotein complex part of a tripartite complex with dynein and a adapter, such as BICDL1, BICD2 or HOOK3. The dynactin complex is built around ACTR1A/ACTB filament and consists of an actin-related filament composed of a shoulder domain, a pointed end and a barbed end. Its length is defined by its flexible shoulder domain. The soulder is composed of 2 DCTN1 subunits, 4 DCTN2 and 2 DCTN3. The 4 DCNT2 (via N-terminus) bind the ACTR1A filament and act as molecular rulers to determine the length. The pointed end is important for binding dynein-dynactin cargo adapters and consists of 4 subunits: ACTR10, DCNT4, DCTN5 and DCTN6. The barbed end is composed of a CAPZA1:CAPZB heterodimers, which binds ACTR1A/ACTB filament and dynactin and stabilizes dynactin. Interacts with BICD2 and CEP135. Interacts with DYNAP. Interacts with ECPAS. Interacts with MAPRE1.

Its subcellular location is the cytoplasm. The protein localises to the cytoskeleton. It localises to the microtubule organizing center. It is found in the centrosome. The protein resides in the membrane. Functionally, part of the dynactin complex that activates the molecular motor dynein for ultra-processive transport along microtubules. In the dynactin soulder domain, binds the ACTR1A filament and acts as a molecular ruler to determine the length. Modulates cytoplasmic dynein binding to an organelle, and plays a role in prometaphase chromosome alignment and spindle organization during mitosis. Involved in anchoring microtubules to centrosomes. May play a role in synapse formation during brain development. The polypeptide is Dynactin subunit 2 (Dctn2) (Rattus norvegicus (Rat)).